The sequence spans 136 residues: MEKIEKIIEFEIARINSHLPRARRSLKELLEMKEAKVTLRDGSEHYFKREELKLLANLLDEDEISKLKLPIVIEISTLERDKIMIRGRVEVKVIKKVLGLEEGYLEENVLKLPRYYLAEIRRKLPTTTVHAFIVEW.

It belongs to the UPF0216 family.

The protein is UPF0216 protein PH0358 of Pyrococcus horikoshii (strain ATCC 700860 / DSM 12428 / JCM 9974 / NBRC 100139 / OT-3).